We begin with the raw amino-acid sequence, 1857 residues long: Phosphatidylinositol 3-kinase 2 (1857 aa).

Low complexity-rich tracts occupy residues 1-32 (MKMS…SNGS) and 42-55 (NLSV…SNNS). Disordered stretches follow at residues 1-61 (MKMS…KSST), 145-313 (TPLN…TNRV), 348-468 (SSSK…NSIR), 481-512 (ISSN…GERV), and 530-573 (ESDI…GPNV). The segment covering 145–155 (TPLNRSRSGSI) has biased composition (polar residues). The span at 162–269 (NNLTSSSSSS…NNNNNNNSNS (108 aa)) shows a compositional bias: low complexity. A compositionally biased stretch (polar residues) spans 270–281 (GGSSRMITSKSQ). Composition is skewed to low complexity over residues 288 to 311 (TSNT…TPTN) and 352 to 464 (LLIP…QPSN). The segment covering 533–560 (ISSSPRSIGSPNSIRASISSQLPPSLSS) has biased composition (low complexity). Positions 561–570 (IGGGGGGGSG) are enriched in gly residues. A PI3K-RBD domain is found at 821-934 (PNKITIMVLL…NQTVELSLTN (114 aa)). Positions 996–1078 (KETNKENKDS…SGSGNGSEQP (83 aa)) are disordered. A compositionally biased stretch (basic and acidic residues) spans 997-1011 (ETNKENKDSNKENKD). Positions 1012–1056 (SSSNNNNNNNNNNNNNNNNNNNNNNNNNNNGNNNGNNSNNNSNSN) are enriched in low complexity. The C2 PI3K-type domain maps to 1099–1271 (VKRLFRVNIA…QPIILLVEFE (173 aa)). Residues 1326 to 1503 (PVGLKKLDLD…GLLLEGYLRS (178 aa)) form the PIK helical domain. The PI3K/PI4K catalytic domain occupies 1568-1845 (IIDKCRYMDS…NISVALNTKT (278 aa)). The segment at 1574-1580 (YMDSKKL) is G-loop. The segment at 1711 to 1719 (GIGDRHSDN) is catalytic loop. The interval 1730-1756 (HIDFGHFLGNYKKKYGFKRERAPFIFT) is activation loop.

It belongs to the PI3/PI4-kinase family.

It carries out the reaction a 1,2-diacyl-sn-glycero-3-phospho-(1D-myo-inositol) + ATP = a 1,2-diacyl-sn-glycero-3-phospho-(1D-myo-inositol-3-phosphate) + ADP + H(+). This Dictyostelium discoideum (Social amoeba) protein is Phosphatidylinositol 3-kinase 2 (pikB).